The primary structure comprises 409 residues: uncharacterized protein (409 aa).

The OBG-type G domain maps to 5 to 274 (ILIGFVGKPS…LAKQGFVKYE (270 aa)). GTP is bound by residues 11–18 (GKPSSGKS) and 83–87 (DVAGL).

It belongs to the TRAFAC class OBG-HflX-like GTPase superfamily. OBG GTPase family.

Its subcellular location is the cytoplasm. It is found in the nucleus. This is an uncharacterized protein from Schizosaccharomyces pombe (strain 972 / ATCC 24843) (Fission yeast).